The sequence spans 101 residues: Chaperone modulatory protein CbpM (101 aa).

It belongs to the CbpM family.

Its function is as follows. Interacts with CbpA and inhibits both the DnaJ-like co-chaperone activity and the DNA binding activity of CbpA. Together with CbpA, modulates the activity of the DnaK chaperone system. Does not inhibit the co-chaperone activity of DnaJ. In Salmonella arizonae (strain ATCC BAA-731 / CDC346-86 / RSK2980), this protein is Chaperone modulatory protein CbpM.